A 277-amino-acid chain; its full sequence is uncharacterized protein (277 aa).

This is an uncharacterized protein from Acanthamoeba polyphaga mimivirus (APMV).